Here is a 613-residue protein sequence, read N- to C-terminus: Oxidoreductase GME11365 (613 aa).

Plastocyanin-like domains are found at residues 72 to 188, 198 to 331, and 431 to 571; these read ISEA…HGPS, PLLI…WIHG, and VDWR…EQPS.

The protein belongs to the multicopper oxidase family.

It functions in the pathway secondary metabolite biosynthesis. In terms of biological role, oxidoreductase; part of the gene cluster that mediates the biosynthesis of dibenzodioxocinones such as pestalotiollide B, a novel class of inhibitors against cholesterol ester transfer protein (CEPT). The biosynthesis initiates from condensation of acetate and malonate units catalyzed by the non-reducing PKS pks8/GME11356. Pks8/GME11356 lacks a thioesterase (TE) domain, which is important to the cyclizing of the third ring of atrochrysone carboxylic acid, and the esterase GME11355 might play the role of TE and catalyzes the cyclization reaction of the C ring. The lactamase-like protein GME11357 (or other beta-lactamases in Pestalotiopsis microspora) probably hydrolyzes the thioester bond between the ACP of pks8/GME11356 and the intermediate to release atrochrysone carboxylic acid, which is spontaneously dehydrates to form endocrocin anthrone. Endocrocin anthrone is further converted to emodin via the endocrocin intermediate. Emodin is then oxidized by several enzymes such as the Baeyer-Villiger oxidase GME11358, the oxidoreductase GME11367, the short chain dehydrogenase/reductase GME11373, as well as by other oxidoreductases from the cluster, to modify the A and C rings and open the B ring, and finally yield monodictyphenone. The prenyltransferase GME11375 may catalyze the addition reaction between the C5 side chains and the carbon bone of dibenzodioxocinones. The remaining biochemical reactions to the final product dibenzodioxocinones should be methylation catalyzed by methyltransferase GME11366 and reduction and lactonization reaction catalyzed by a series of oxidordeuctases. The sequence is that of Oxidoreductase GME11365 from Pestalotiopsis microspora.